A 357-amino-acid chain; its full sequence is Cyclin-dependent kinase-like 1 (357 aa).

A Protein kinase domain is found at 4-287 (YEKIGKIGEG…CEQLLHHPYF (284 aa)). Residues 10-18 (IGEGSYGVV) and K33 each bind ATP. Residues 45–51 (KKIALRE) carry the [NKR]KIAxRE motif. Catalysis depends on D126, which acts as the Proton acceptor.

It belongs to the protein kinase superfamily. CMGC Ser/Thr protein kinase family. CDC2/CDKX subfamily. As to expression, highly expressed in kidney, and to a lower extent in ovary.

It is found in the cytoplasm. The protein localises to the nucleus. The enzyme catalyses L-seryl-[protein] + ATP = O-phospho-L-seryl-[protein] + ADP + H(+). It carries out the reaction L-threonyl-[protein] + ATP = O-phospho-L-threonyl-[protein] + ADP + H(+). The protein is Cyclin-dependent kinase-like 1 of Homo sapiens (Human).